A 909-amino-acid polypeptide reads, in one-letter code: Translation initiation factor IF-2 (909 aa).

The interval 49 to 314 (LNREQGGSAG…GKQRKTSTLQ (266 aa)) is disordered. Composition is skewed to basic and acidic residues over residues 99-177 (DAVE…EHKQ), 186-236 (IQSE…KWSS), and 255-270 (RAAEDENDAKVEGDRR). Residues 271–285 (ARGRSGKATRQKKNN) are compositionally biased toward basic residues. Basic and acidic residues predominate over residues 286-299 (KHSESKADREEARA). One can recognise a tr-type G domain in the interval 408 to 577 (PRAPVVTIMG…LLQAEVLELK (170 aa)). The interval 417–424 (GHVDHGKT) is G1. A GTP-binding site is contributed by 417–424 (GHVDHGKT). The interval 442–446 (GITQH) is G2. Residues 463 to 466 (DTPG) form a G3 region. GTP contacts are provided by residues 463–467 (DTPGH) and 517–520 (NKID). The segment at 517–520 (NKID) is G4. The tract at residues 553–555 (SAK) is G5.

It belongs to the TRAFAC class translation factor GTPase superfamily. Classic translation factor GTPase family. IF-2 subfamily.

Its subcellular location is the cytoplasm. Functionally, one of the essential components for the initiation of protein synthesis. Protects formylmethionyl-tRNA from spontaneous hydrolysis and promotes its binding to the 30S ribosomal subunits. Also involved in the hydrolysis of GTP during the formation of the 70S ribosomal complex. The polypeptide is Translation initiation factor IF-2 (Photorhabdus laumondii subsp. laumondii (strain DSM 15139 / CIP 105565 / TT01) (Photorhabdus luminescens subsp. laumondii)).